The sequence spans 353 residues: Photosystem II protein D1 (353 aa).

Residue Thr2 is modified to N-acetylthreonine. At Thr2 the chain carries Phosphothreonine. The next 3 helical transmembrane spans lie at 29-46 (YVGW…TAVS), 118-133 (HFFL…EWEL), and 142-156 (WIAV…AATA). Position 118 (His118) interacts with chlorophyll a. Tyr126 serves as a coordination point for pheophytin a. Residues Asp170 and Glu189 each contribute to the [CaMn4O5] cluster site. A helical transmembrane segment spans residues 197-218 (FHMLGVAGVFGGSLFSAMHGSL). Position 198 (His198) interacts with chlorophyll a. Residues His215 and 264–265 (SF) contribute to the a quinone site. Residue His215 coordinates Fe cation. His272 lines the Fe cation pocket. A helical transmembrane segment spans residues 274–288 (FLAAWPVVGIWFTAL). [CaMn4O5] cluster-binding residues include His332, Glu333, Asp342, and Ala344. Positions 345–353 (SVEAPSING) are excised as a propeptide.

It belongs to the reaction center PufL/M/PsbA/D family. As to quaternary structure, PSII is composed of 1 copy each of membrane proteins PsbA, PsbB, PsbC, PsbD, PsbE, PsbF, PsbH, PsbI, PsbJ, PsbK, PsbL, PsbM, PsbT, PsbX, PsbY, PsbZ, Psb30/Ycf12, at least 3 peripheral proteins of the oxygen-evolving complex and a large number of cofactors. It forms dimeric complexes. Requires The D1/D2 heterodimer binds P680, chlorophylls that are the primary electron donor of PSII, and subsequent electron acceptors. It shares a non-heme iron and each subunit binds pheophytin, quinone, additional chlorophylls, carotenoids and lipids. D1 provides most of the ligands for the Mn4-Ca-O5 cluster of the oxygen-evolving complex (OEC). There is also a Cl(-1) ion associated with D1 and D2, which is required for oxygen evolution. The PSII complex binds additional chlorophylls, carotenoids and specific lipids. as cofactor. In terms of processing, tyr-161 forms a radical intermediate that is referred to as redox-active TyrZ, YZ or Y-Z. Post-translationally, C-terminally processed by CTPA; processing is essential to allow assembly of the oxygen-evolving complex and thus photosynthetic growth.

It localises to the plastid. It is found in the chloroplast thylakoid membrane. The enzyme catalyses 2 a plastoquinone + 4 hnu + 2 H2O = 2 a plastoquinol + O2. Photosystem II (PSII) is a light-driven water:plastoquinone oxidoreductase that uses light energy to abstract electrons from H(2)O, generating O(2) and a proton gradient subsequently used for ATP formation. It consists of a core antenna complex that captures photons, and an electron transfer chain that converts photonic excitation into a charge separation. The D1/D2 (PsbA/PsbD) reaction center heterodimer binds P680, the primary electron donor of PSII as well as several subsequent electron acceptors. The polypeptide is Photosystem II protein D1 (Tupiella akineta (Green alga)).